A 536-amino-acid chain; its full sequence is Putative beta-xylosidase (536 aa).

The active-site Proton acceptor is the D14. Residue E186 is the Proton donor of the active site.

The protein belongs to the glycosyl hydrolase 43 family.

The catalysed reaction is Hydrolysis of (1-&gt;4)-beta-D-xylans, to remove successive D-xylose residues from the non-reducing termini.. This is Putative beta-xylosidase (yagH) from Escherichia coli (strain K12).